Reading from the N-terminus, the 351-residue chain is GDSL esterase/lipase At4g26790 (351 aa).

Positions 1–25 are cleaved as a signal peptide; that stretch reads MQRNRVLAFLLLAAQLLVKIPETCA. Ser-36 functions as the Nucleophile in the catalytic mechanism. An N-linked (GlcNAc...) asparagine glycan is attached at Asn-118. Residues Asp-326 and His-329 contribute to the active site.

This sequence belongs to the 'GDSL' lipolytic enzyme family.

The protein localises to the secreted. The polypeptide is GDSL esterase/lipase At4g26790 (Arabidopsis thaliana (Mouse-ear cress)).